The sequence spans 388 residues: Succinate--CoA ligase [ADP-forming] subunit beta (388 aa).

An ATP-grasp domain is found at 9 to 244 (KQLFREYGLP…TTQDDEREMH (236 aa)). Residues Lys-46, 53-55 (GRG), Glu-99, Ser-102, and Glu-107 contribute to the ATP site. Mg(2+)-binding residues include Asn-199 and Asp-213. Substrate contacts are provided by residues Asn-264 and 321-323 (GIV).

It belongs to the succinate/malate CoA ligase beta subunit family. As to quaternary structure, heterotetramer of two alpha and two beta subunits. Requires Mg(2+) as cofactor.

It catalyses the reaction succinate + ATP + CoA = succinyl-CoA + ADP + phosphate. It carries out the reaction GTP + succinate + CoA = succinyl-CoA + GDP + phosphate. Its pathway is carbohydrate metabolism; tricarboxylic acid cycle; succinate from succinyl-CoA (ligase route): step 1/1. In terms of biological role, succinyl-CoA synthetase functions in the citric acid cycle (TCA), coupling the hydrolysis of succinyl-CoA to the synthesis of either ATP or GTP and thus represents the only step of substrate-level phosphorylation in the TCA. The beta subunit provides nucleotide specificity of the enzyme and binds the substrate succinate, while the binding sites for coenzyme A and phosphate are found in the alpha subunit. The polypeptide is Succinate--CoA ligase [ADP-forming] subunit beta (Psychromonas ingrahamii (strain DSM 17664 / CCUG 51855 / 37)).